A 253-amino-acid polypeptide reads, in one-letter code: 5'-nucleotidase SurE (253 aa).

A divalent metal cation is bound by residues aspartate 8, aspartate 9, serine 40, and asparagine 93.

This sequence belongs to the SurE nucleotidase family. The cofactor is a divalent metal cation.

Its subcellular location is the cytoplasm. It catalyses the reaction a ribonucleoside 5'-phosphate + H2O = a ribonucleoside + phosphate. Nucleotidase that shows phosphatase activity on nucleoside 5'-monophosphates. This chain is 5'-nucleotidase SurE, found in Haemophilus ducreyi (strain 35000HP / ATCC 700724).